We begin with the raw amino-acid sequence, 90 residues long: MSRIAKAAGVALGTGAVVLSGTGMAMADAGAAGAAVGSPGVLSGNVVQVPVHVPVNLCGNTIDVIGLLNPAFGNACENGDDDDKSGGYGG.

An N-terminal signal peptide occupies residues 1–27 (MSRIAKAAGVALGTGAVVLSGTGMAMA). The Chaplin domain maps to 38 to 78 (SPGVLSGNVVQVPVHVPVNLCGNTIDVIGLLNPAFGNACEN). Cys58 and Cys76 are disulfide-bonded.

The protein belongs to the chaplin family. Short chaplin subfamily.

The protein localises to the cell surface. The protein resides in the secreted. It is found in the cell wall. Its function is as follows. One of 8 partially redundant surface-active proteins required for efficient formation of aerial mycelium; the short chaplins assemble into a hydrophobic, amyloidal fibrillar surface layer that envelopes and protects aerial hyphae and spores, presumably anchored to the long chaplins. Chaplins have an overlapping function with the surface-active SapB peptide; chaplins are essential on minimal medium while on rich medium both chaplins and SapB are required for efficient aerial hyphae formation. Chaplins are also involved in cell attachment to a hydrophobic surface. Forms amyloid fibrils in vitro probably composed of stacked beta-sheets, at low extracellular concentrations individually restores the ability to form aerial hyphae to a chaplin-deficient strain. A small chaplin extract (ChpD, ChpE, ChpF, ChpG and ChpH) self-assembles into 2 different amyloids; small fibrils at the air-water interface form an amphipathic membrane that resembles spore-surface structures involved in aerial hyphae formation, and hydrophilic fibrils in solution that resemble the fibers that attach cells to a hydrophobic surface. At the air-water interface the hydrophilic surface is in contact with water (probably equivalent to the peptidoglycan layer), while the hydrophobic face is exposed to the air, making the surface of the aerial hyphae hydrophobic. A small chaplin extract applied to a chaplin-deficient strain restores aerial hyphae formation. The small chaplin extract forms an amyloid-like structure similar to that seen on the surface of cells without rodlets (rdlA-rdlB deletions), and is highly surface active, reducing surface tension from 72 to 26 mJ/m(2), which probably allows escape of hyphae from an aqueous environment into air. ChpF and ChpG are sufficient to restore the rodlet layer and hydrophobicity to a strain deleted for the other 6 chaplin genes. The polypeptide is Chaplin-G (Streptomyces coelicolor (strain ATCC BAA-471 / A3(2) / M145)).